The primary structure comprises 67 residues: ATP synthase F(0) complex subunit 8 (67 aa).

Residues 8–24 (TWLIMISSMILTLFITF) form a helical membrane-spanning segment. Lys54 carries the post-translational modification N6-acetyllysine; alternate. N6-succinyllysine; alternate is present on Lys54. At Lys57 the chain carries N6-acetyllysine.

It belongs to the ATPase protein 8 family. As to quaternary structure, component of the ATP synthase complex composed at least of ATP5F1A/subunit alpha, ATP5F1B/subunit beta, ATP5MC1/subunit c (homooctomer), MT-ATP6/subunit a, MT-ATP8/subunit 8, ATP5ME/subunit e, ATP5MF/subunit f, ATP5MG/subunit g, ATP5MK/subunit k, ATP5MJ/subunit j, ATP5F1C/subunit gamma, ATP5F1D/subunit delta, ATP5F1E/subunit epsilon, ATP5PF/subunit F6, ATP5PB/subunit b, ATP5PD/subunit d, ATP5PO/subunit OSCP. ATP synthase complex consists of a soluble F(1) head domain (subunits alpha(3) and beta(3)) - the catalytic core - and a membrane F(0) domain - the membrane proton channel (subunits c, a, 8, e, f, g, k and j). These two domains are linked by a central stalk (subunits gamma, delta, and epsilon) rotating inside the F1 region and a stationary peripheral stalk (subunits F6, b, d, and OSCP). Interacts with PRICKLE3.

It localises to the mitochondrion membrane. Subunit 8, of the mitochondrial membrane ATP synthase complex (F(1)F(0) ATP synthase or Complex V) that produces ATP from ADP in the presence of a proton gradient across the membrane which is generated by electron transport complexes of the respiratory chain. ATP synthase complex consist of a soluble F(1) head domain - the catalytic core - and a membrane F(1) domain - the membrane proton channel. These two domains are linked by a central stalk rotating inside the F(1) region and a stationary peripheral stalk. During catalysis, ATP synthesis in the catalytic domain of F(1) is coupled via a rotary mechanism of the central stalk subunits to proton translocation. In vivo, can only synthesize ATP although its ATP hydrolase activity can be activated artificially in vitro. Part of the complex F(0) domain. The chain is ATP synthase F(0) complex subunit 8 from Halichoerus grypus (Gray seal).